A 79-amino-acid chain; its full sequence is MKNGIHPDYKKFLIKVGSDVFETMSTHPAGEILMDVDFRKHPAWNKDIGNVVNQSNKSISDFNKRFSGLSFGSQKKEAS.

This sequence belongs to the bacterial ribosomal protein bL31 family. Type A subfamily. Part of the 50S ribosomal subunit.

Functionally, binds the 23S rRNA. In Rickettsia bellii (strain RML369-C), this protein is Large ribosomal subunit protein bL31 (rpmE).